Here is a 236-residue protein sequence, read N- to C-terminus: Small ribosomal subunit protein uS5 (236 aa).

In terms of domain architecture, S5 DRBM spans 61–124 (ENQEIIDIAL…NYAKLNIIEI (64 aa)).

The protein belongs to the universal ribosomal protein uS5 family. Part of the 30S ribosomal subunit. Contacts protein S4.

In terms of biological role, with S4 and S12 plays an important role in translational accuracy. The sequence is that of Small ribosomal subunit protein uS5 from Pyrococcus horikoshii (strain ATCC 700860 / DSM 12428 / JCM 9974 / NBRC 100139 / OT-3).